A 221-amino-acid polypeptide reads, in one-letter code: Transcription factor HES-4 (221 aa).

A compositionally biased stretch (low complexity) spans 1–22; sequence MAADTPGKPSASPMAGAPASAS. Positions 1–49 are disordered; it reads MAADTPGKPSASPMAGAPASASRTPDKPRSAAEHRKSSKPVMEKRRRAR. Basic and acidic residues predominate over residues 24-35; the sequence is TPDKPRSAAEHR. The bHLH domain occupies 34–91; it reads HRKSSKPVMEKRRRARINESLAQLKTLILDALRKESSRHSKLEKADILEMTVRHLRSL. The Orange domain maps to 110-143; the sequence is YRAGFHECLAEVNRFLAGCEGVPADVRSRLLGHL. Residues 201–221 are disordered; it reads LPAAPRAGPQGPGGPWRPWLR. The short motif at 216–219 is the WRPW motif element; that stretch reads WRPW.

In terms of assembly, transcription repression requires formation of a complex with a corepressor protein of the Groucho/TLE family.

The protein localises to the nucleus. Its function is as follows. Transcriptional repressor. Binds DNA on N-box motifs: 5'-CACNAG-3'. This Homo sapiens (Human) protein is Transcription factor HES-4 (HES4).